We begin with the raw amino-acid sequence, 73 residues long: Large ribosomal subunit protein bL31 (73 aa).

Residues cysteine 16, cysteine 18, cysteine 37, and cysteine 40 each contribute to the Zn(2+) site.

It belongs to the bacterial ribosomal protein bL31 family. Type A subfamily. As to quaternary structure, part of the 50S ribosomal subunit. The cofactor is Zn(2+).

Functionally, binds the 23S rRNA. The protein is Large ribosomal subunit protein bL31 of Marinobacter nauticus (strain ATCC 700491 / DSM 11845 / VT8) (Marinobacter aquaeolei).